The chain runs to 428 residues: Dihydroorotase (428 aa).

Positions 59 and 61 each coordinate Zn(2+). Residues 61-63 and Asn-93 each bind substrate; that span reads HLR. Positions 151, 178, and 231 each coordinate Zn(2+). Asn-277 lines the substrate pocket. Zn(2+) is bound at residue Asp-304. Residue Asp-304 is part of the active site. Residues His-308 and 322–323 each bind substrate; that span reads FG.

It belongs to the metallo-dependent hydrolases superfamily. DHOase family. Class I DHOase subfamily. The cofactor is Zn(2+).

The enzyme catalyses (S)-dihydroorotate + H2O = N-carbamoyl-L-aspartate + H(+). It participates in pyrimidine metabolism; UMP biosynthesis via de novo pathway; (S)-dihydroorotate from bicarbonate: step 3/3. Functionally, catalyzes the reversible cyclization of carbamoyl aspartate to dihydroorotate. In Bacillus anthracis (strain A0248), this protein is Dihydroorotase.